Consider the following 258-residue polypeptide: UPF0246 protein CGSHiGG_08495 (258 aa).

This sequence belongs to the UPF0246 family.

This chain is UPF0246 protein CGSHiGG_08495, found in Haemophilus influenzae (strain PittGG).